The primary structure comprises 193 residues: Xanthine phosphoribosyltransferase (193 aa).

Xanthine-binding residues include L20 and T27. 5-phospho-alpha-D-ribose 1-diphosphate is bound at residue 128-132 (ANGQA). Residue K156 coordinates xanthine.

The protein belongs to the purine/pyrimidine phosphoribosyltransferase family. Xpt subfamily. In terms of assembly, homodimer.

It localises to the cytoplasm. It catalyses the reaction XMP + diphosphate = xanthine + 5-phospho-alpha-D-ribose 1-diphosphate. The protein operates within purine metabolism; XMP biosynthesis via salvage pathway; XMP from xanthine: step 1/1. In terms of biological role, converts the preformed base xanthine, a product of nucleic acid breakdown, to xanthosine 5'-monophosphate (XMP), so it can be reused for RNA or DNA synthesis. This Streptococcus pneumoniae (strain CGSP14) protein is Xanthine phosphoribosyltransferase.